The chain runs to 328 residues: MNFIDEVKIYIKGGNGGNGCVSFHREKFIDRGGPDGGDGGRGGSIIFRSNHHLNTLVNYRYKQHFIADSGENGKGSNKSGKSGKSLTLDVPIGTQIFAEDSDILLHDFTEDDQTFEIIKGGNGGLGNSHFKTSVNQAPRRRTEGEIAEEMWVQLSLKLLSDVGLVGLPNAGKSTFLSVVSAAKPKIADYPFTTLVPNLGVVYIDDEEFVIADIPGLIEGASQGHGLGDKFLKHIERCNVLIHLIDGSSEDVVADYNIVRTELESYSDYLKDKTQIICLNKIDVLTDEEIAEKTTQLQKITGKEIFPISTYTNTGITKIIKLALQTIKD.

In terms of domain architecture, Obg spans 1–159 (MNFIDEVKIY…MWVQLSLKLL (159 aa)). The OBG-type G domain occupies 160-327 (SDVGLVGLPN…IIKLALQTIK (168 aa)). GTP contacts are provided by residues 166 to 173 (GLPNAGKS), 191 to 195 (FTTLV), 212 to 215 (DIPG), 279 to 282 (NKID), and 308 to 310 (STY). Mg(2+) is bound by residues Ser-173 and Thr-193.

Belongs to the TRAFAC class OBG-HflX-like GTPase superfamily. OBG GTPase family. Monomer. It depends on Mg(2+) as a cofactor.

It is found in the cytoplasm. Its function is as follows. An essential GTPase which binds GTP, GDP and possibly (p)ppGpp with moderate affinity, with high nucleotide exchange rates and a fairly low GTP hydrolysis rate. Plays a role in control of the cell cycle, stress response, ribosome biogenesis and in those bacteria that undergo differentiation, in morphogenesis control. The polypeptide is GTPase Obg (Rickettsia bellii (strain RML369-C)).